A 382-amino-acid chain; its full sequence is Lipid-A-disaccharide synthase (382 aa).

The protein belongs to the LpxB family.

The enzyme catalyses 2-N,3-O-bis[(3R)-3-hydroxytetradecanoyl]-alpha-D-glucosaminyl 1-phosphate + UDP-2-N,3-O-bis[(3R)-3-hydroxytetradecanoyl]-alpha-D-glucosamine = lipid A disaccharide (E. coli) + UDP + H(+). It carries out the reaction a lipid X + a UDP-2-N,3-O-bis[(3R)-3-hydroxyacyl]-alpha-D-glucosamine = a lipid A disaccharide + UDP + H(+). It participates in glycolipid biosynthesis; lipid IV(A) biosynthesis; lipid IV(A) from (3R)-3-hydroxytetradecanoyl-[acyl-carrier-protein] and UDP-N-acetyl-alpha-D-glucosamine: step 5/6. Condensation of UDP-2,3-diacylglucosamine and 2,3-diacylglucosamine-1-phosphate to form lipid A disaccharide, a precursor of lipid A, a phosphorylated glycolipid that anchors the lipopolysaccharide to the outer membrane of the cell. This Escherichia coli O17:K52:H18 (strain UMN026 / ExPEC) protein is Lipid-A-disaccharide synthase.